Reading from the N-terminus, the 417-residue chain is Phosphoglycerate kinase (417 aa).

Substrate-binding positions include aspartate 24–asparagine 26, arginine 44, histidine 67–arginine 70, arginine 126, and arginine 170. ATP is bound by residues lysine 220, glycine 316, glutamate 347, and glycine 373–serine 376.

The protein belongs to the phosphoglycerate kinase family. In terms of assembly, monomer.

It is found in the cytoplasm. The catalysed reaction is (2R)-3-phosphoglycerate + ATP = (2R)-3-phospho-glyceroyl phosphate + ADP. It functions in the pathway carbohydrate degradation; glycolysis; pyruvate from D-glyceraldehyde 3-phosphate: step 2/5. The chain is Phosphoglycerate kinase from Renibacterium salmoninarum (strain ATCC 33209 / DSM 20767 / JCM 11484 / NBRC 15589 / NCIMB 2235).